A 364-amino-acid chain; its full sequence is Peptidyl-prolyl cis-trans isomerase D (364 aa).

A PPIase cyclophilin-type domain is found at 7–170 (YFDITIGNKP…EDAVIAKCGE (164 aa)). 3 TPR repeats span residues 208 to 241 (ATHLKDIGNTYFKKGDHANAAKKYLKAIRYLNEK), 261 to 294 (IPCYLNRSMCALKLGEYSECVKVTTTVLEYDSKY), and 301 to 334 (TKAYFRRGSAKMNTRDFEGAIEDFEKAHEKDPED).

This sequence belongs to the cyclophilin-type PPIase family. PPIase D subfamily.

Its subcellular location is the cytoplasm. The catalysed reaction is [protein]-peptidylproline (omega=180) = [protein]-peptidylproline (omega=0). In terms of biological role, PPIases accelerate the folding of proteins. It catalyzes the cis-trans isomerization of proline imidic peptide bonds in oligopeptides. The polypeptide is Peptidyl-prolyl cis-trans isomerase D (cyp12) (Rhizopus delemar (strain RA 99-880 / ATCC MYA-4621 / FGSC 9543 / NRRL 43880) (Mucormycosis agent)).